A 284-amino-acid chain; its full sequence is MKVFILALLALAATTAIAQLETTCSQGFGQSQQQQQPGQRQLLEQMKPCVAFLQQKCSPLRMPFLQTQVEQLSSCQIVQYQCCQQLAQIPERTRCHAIHIVVEAIIQQQSQQQWQEPQQQAQHKSMRMLLENLSLMCNIYVPVQCQQQQQLGQQQQQQLQEQLTPCTTFLQQQCSPVTVPFPQIPVDQPTSCQNVQHQCCRQLSQIPEQFRCQAIHNVAEAIRQQQPQQQWQGMYQPQQPAQLESIRMSLQALRSMCSIYIPVQCPAPTTYNIPLVATYTGGAC.

The first 18 residues, M1 to A18, serve as a signal peptide directing secretion.

This sequence belongs to the prolamin family. Post-translationally, contains disulfide bonds.

Its function is as follows. Seed storage protein. Might be integrated via inter-chain disulfide bonds within the glutenin polymer. This is Avenin-like b6 from Triticum aestivum (Wheat).